Consider the following 188-residue polypeptide: Pyridoxal 5'-phosphate synthase subunit PdxT (188 aa).

L-glutamine is bound at residue G46 to S48. C78 functions as the Nucleophile in the catalytic mechanism. Residues R105 and I134–R135 contribute to the L-glutamine site. Residues H170 and E172 each act as charge relay system in the active site.

This sequence belongs to the glutaminase PdxT/SNO family. As to quaternary structure, in the presence of PdxS, forms a dodecamer of heterodimers. Only shows activity in the heterodimer.

The catalysed reaction is aldehydo-D-ribose 5-phosphate + D-glyceraldehyde 3-phosphate + L-glutamine = pyridoxal 5'-phosphate + L-glutamate + phosphate + 3 H2O + H(+). The enzyme catalyses L-glutamine + H2O = L-glutamate + NH4(+). Its pathway is cofactor biosynthesis; pyridoxal 5'-phosphate biosynthesis. Catalyzes the hydrolysis of glutamine to glutamate and ammonia as part of the biosynthesis of pyridoxal 5'-phosphate. The resulting ammonia molecule is channeled to the active site of PdxS. This chain is Pyridoxal 5'-phosphate synthase subunit PdxT, found in Clostridium kluyveri (strain ATCC 8527 / DSM 555 / NBRC 12016 / NCIMB 10680 / K1).